Here is an 85-residue protein sequence, read N- to C-terminus: Large ribosomal subunit protein bL27 (85 aa).

The tract at residues 1–20 is disordered; sequence MAHKKAAGSTRNGRDSEAKR.

It belongs to the bacterial ribosomal protein bL27 family.

This chain is Large ribosomal subunit protein bL27, found in Colwellia psychrerythraea (strain 34H / ATCC BAA-681) (Vibrio psychroerythus).